Consider the following 503-residue polypeptide: UDP-N-acetylmuramoylalanine--D-glutamate ligase (503 aa).

Residue 129 to 135 (GTNGKTT) participates in ATP binding.

Belongs to the MurCDEF family.

The protein resides in the cytoplasm. It catalyses the reaction UDP-N-acetyl-alpha-D-muramoyl-L-alanine + D-glutamate + ATP = UDP-N-acetyl-alpha-D-muramoyl-L-alanyl-D-glutamate + ADP + phosphate + H(+). The protein operates within cell wall biogenesis; peptidoglycan biosynthesis. Its function is as follows. Cell wall formation. Catalyzes the addition of glutamate to the nucleotide precursor UDP-N-acetylmuramoyl-L-alanine (UMA). The chain is UDP-N-acetylmuramoylalanine--D-glutamate ligase from Burkholderia multivorans (strain ATCC 17616 / 249).